Consider the following 233-residue polypeptide: Homeobox protein ceh-30 (233 aa).

A compositionally biased stretch (polar residues) spans Asn50–Ser85. 2 disordered regions span residues Asn50–Thr93 and Phe206–Asp233. Positions Ser88 to Ala147 form a DNA-binding region, homeobox. Residues Pro224–Asp233 show a composition bias toward polar residues.

The protein localises to the nucleus. Functionally, cell-type specific anti-apoptotic transcription factor required for the sexually dimorphic survival of the male-specific CEM (cephalic male) sensory neurons during sex determination. In hermaphrodites, the homologous cells undergo programmed cell death due to transcriptional repression of ceh-30 by tra-1, the terminal regulator in the sex determination pathway. This is Homeobox protein ceh-30 from Caenorhabditis briggsae.